The following is a 471-amino-acid chain: MKHKVKRIHFVGIGGAGMSGIAEVLANLGFMVSGSDLGENAATRRLAALGVQVRVGHAAENVAGADAVVISTAVRNDNPEVVAARSRHVPIVPRAQMLAELMRLKHGIAIAGTHGKTTTTSLVASILAEGGMDPTFVIGGKLNAAGANARLGKGDFLVAEADESDASFLLLTPVISVITNIDADHMDTYGHDFARLKQAFVDFLQHLPFYGVAVLCEDDPHVRSIMPLVSKQVVRYGLSESANIRAENVRAEGGRMLFDVVRTNGSVSRLPIELNLPGVHNVLNALAAIAVATEVQVPDAAIIKALAEFRGVGRRFQRYGEVALRDAEGTPQGSCTLIDDYGHHPVEMAATLAAARGAFPGRRLVLAFQPHRYTRTRDCFEDFVKVLSTVDALLLAEVYAAGEAPVVAADGRSLARAIRVAGKVEPVFVEDIDEMPATVLAAVRDGDVVITMGAGSIGAVPGKLASSEELV.

112-118 (GTHGKTT) lines the ATP pocket.

It belongs to the MurCDEF family.

Its subcellular location is the cytoplasm. The catalysed reaction is UDP-N-acetyl-alpha-D-muramate + L-alanine + ATP = UDP-N-acetyl-alpha-D-muramoyl-L-alanine + ADP + phosphate + H(+). It functions in the pathway cell wall biogenesis; peptidoglycan biosynthesis. Cell wall formation. The sequence is that of UDP-N-acetylmuramate--L-alanine ligase from Aromatoleum aromaticum (strain DSM 19018 / LMG 30748 / EbN1) (Azoarcus sp. (strain EbN1)).